The primary structure comprises 461 residues: Argininosuccinate lyase (461 aa).

Belongs to the lyase 1 family. Argininosuccinate lyase subfamily.

The protein localises to the cytoplasm. It carries out the reaction 2-(N(omega)-L-arginino)succinate = fumarate + L-arginine. It participates in amino-acid biosynthesis; L-arginine biosynthesis; L-arginine from L-ornithine and carbamoyl phosphate: step 3/3. This is Argininosuccinate lyase from Clostridium beijerinckii (strain ATCC 51743 / NCIMB 8052) (Clostridium acetobutylicum).